The primary structure comprises 196 residues: Adenosylcobinamide-phosphate guanylyltransferase (196 aa).

In terms of assembly, homodimer.

The catalysed reaction is adenosylcob(III)inamide phosphate + GTP + H(+) = adenosylcob(III)inamide-GDP + diphosphate. It functions in the pathway cofactor biosynthesis; adenosylcobalamin biosynthesis. In terms of biological role, guanylyltransferase that catalyzes the synthesis of adenosylcobinamide-GDP (AdoCbi-GDP) from adenosylcobinamide-phosphate (AdoCbi-P) and GTP. Is involved in adenosylcobalamin biosynthesis. Binds one GTP per dimer. Cannot use other NTPs or GDP. Does not display AdoCbi kinase activity. Is also able to catalyze the condensation of 2-phospho-L-lactate (LP) with GTP in vitro to form PPi and (2S)-lactyl-2-diphospho-5'-guanosine (LPPG), but is much less efficient than CofC, the presumed enzyme catalyzing this reaction in vivo. The protein is Adenosylcobinamide-phosphate guanylyltransferase (cobY) of Methanocaldococcus jannaschii (strain ATCC 43067 / DSM 2661 / JAL-1 / JCM 10045 / NBRC 100440) (Methanococcus jannaschii).